The sequence spans 374 residues: Growth/differentiation factor 8 (374 aa).

The signal sequence occupies residues 1 to 22; sequence MHFTQVLISLSVLIACGPVGYG. Residues 23 to 265 constitute a propeptide that is removed on maturation; it reads DITAHQQPST…ISEGPKRIRR (243 aa). Asn-72 and Asn-274 each carry an N-linked (GlcNAc...) asparagine glycan. 4 disulfides stabilise this stretch: Cys-271–Cys-281, Cys-280–Cys-339, Cys-308–Cys-371, and Cys-312–Cys-373.

Belongs to the TGF-beta family. Homodimer; disulfide-linked. As to expression, predominantly expressed in muscle. At hatching, expression is strongest in the skin epithelium, and is also found in the retina and brain. From day 28, expressed in skeletal muscle. In the adult, highest expression is seen in the gastrointestinal tract, brain, muscle, heart and testis. Also expressed in the adult pharynx, kidney, spleen, liver, gill, eyes, skin, swim bladder and ovary.

It is found in the secreted. In terms of biological role, acts specifically as a negative regulator of skeletal muscle growth. May down-regulate muscle-specific transcription factors such as myod and myog. The polypeptide is Growth/differentiation factor 8 (mstnb) (Danio rerio (Zebrafish)).